The chain runs to 377 residues: Citrate synthase (377 aa).

Catalysis depends on residues H220, H259, and D313.

The protein belongs to the citrate synthase family. As to quaternary structure, homodimer.

It carries out the reaction oxaloacetate + acetyl-CoA + H2O = citrate + CoA + H(+). It participates in carbohydrate metabolism; tricarboxylic acid cycle; isocitrate from oxaloacetate: step 1/2. Functionally, might regulate the synthesis and function of enzymes involved in later enzymatic steps of Krebs cycle. Loss in activity results in sporulation defect. This chain is Citrate synthase (gltA), found in Deinococcus radiodurans (strain ATCC 13939 / DSM 20539 / JCM 16871 / CCUG 27074 / LMG 4051 / NBRC 15346 / NCIMB 9279 / VKM B-1422 / R1).